A 426-amino-acid polypeptide reads, in one-letter code: Citrate transporter (426 aa).

12 consecutive transmembrane segments (helical) span residues 1–21 (MLAI…MSNR), 22–42 (LSAL…SGFG), 59–79 (TGIM…SGLF), 86–106 (ILSF…VLTM), 137–157 (LVLA…PWGG), 176–196 (PLIP…YILG), 232–252 (LLTV…PVLF), 278–298 (AGNA…TGIL), 318–338 (AMGP…TFFM), 343–363 (FYFG…IDAA), 377–397 (LLSP…VSFG), and 406–426 (WAVG…IISF).

It belongs to the CitM (TC 2.A.11) transporter family.

The protein localises to the cell membrane. Its function is as follows. Transports the free citrate anion. Probably cotransports citrate and at least three or four protons. The citrate uptake is inhibited by the presence of magnesium ions. This chain is Citrate transporter (citN), found in Bacillus subtilis (strain 168).